Consider the following 105-residue polypeptide: Small ribosomal subunit protein uS10 (105 aa).

It belongs to the universal ribosomal protein uS10 family. Part of the 30S ribosomal subunit.

Its function is as follows. Involved in the binding of tRNA to the ribosomes. This Rickettsia canadensis (strain McKiel) protein is Small ribosomal subunit protein uS10.